Consider the following 296-residue polypeptide: Iron-sulfur cluster carrier protein (296 aa).

Low complexity predominate over residues 1–17 (MSSNPFRIQNPQPQPQR). The disordered stretch occupies residues 1–23 (MSSNPFRIQNPQPQPQRQPRDLR). 52–59 (GKGGVGKS) provides a ligand contact to ATP.

Belongs to the Mrp/NBP35 ATP-binding proteins family. As to quaternary structure, homodimer.

Its function is as follows. Binds and transfers iron-sulfur (Fe-S) clusters to target apoproteins. Can hydrolyze ATP. The chain is Iron-sulfur cluster carrier protein from Saccharolobus solfataricus (strain ATCC 35092 / DSM 1617 / JCM 11322 / P2) (Sulfolobus solfataricus).